A 1116-amino-acid polypeptide reads, in one-letter code: Disease resistance protein RGA5 (1116 aa).

Positions 1–177 (MDAPASFSLG…HHGVSANLVG (177 aa)) are structured coiled coil (CC) domain. An NB-ARC domain is found at 182 to 466 (KTKLNRWLSD…WSAEGFVSAN (285 aa)). LRR repeat units lie at residues 608–631 (LFQL…ISGL), 633–653 (YLET…LVHL), 654–675 (PNLL…GCMR), 677–701 (LRTL…ELTN), 732–755 (LSNL…DISS), 786–808 (LHKL…DNLT), 810–830 (LPSL…RFIF), 835–857 (LPVL…AGAM), and 858–882 (PNLQ…LFGI). The segment at 935–971 (EEESHPLEKQHHKREKGSSAGHGVLEKESVEDSEKNT) is disordered. The segment covering 958–971 (VLEKESVEDSEKNT) has biased composition (basic and acidic residues). The HMA domain occupies 997 to 1066 (RTKIVVKVHM…KCGLAELLMV (70 aa)). The segment at 1000–1070 (IVVKVHMPCG…AELLMVELVE (71 aa)) is HMA-like domain.

This sequence belongs to the disease resistance NB-LRR family. In terms of assembly, forms homodimer or heterodimer with RGA4 through its coiled coil (CC) domain. Interacts with AVR1-Pia and AVR-CO39 through its C-terminal part containing the HMA-like domain. Expressed in leaves.

It is found in the cytoplasm. Its function is as follows. Disease resistance (R) protein that recognizes the AVR-Pia and AVR1-CO39 effector avirulence proteins from M.oryzae. Resistance proteins guard the plant against pathogens that contain an appropriate avirulence protein via an indirect interaction with this avirulence protein. That triggers a defense system including the hypersensitive response, which restricts the pathogen growth. Contribution of RGA4 is required to recognize the effector avirulence proteins AVR-Pia and AVR1-CO39 from M.oryzae. Acts as a repressor of the RGA4-mediated cell death activation. Upon infection, recognition and binding of the AVR effectors relieve the RGA5-mediated repression and triggers the hypersensitive response. Immune response triggered by the RGA4-RGA5 -mediated recognition of AVR1-CO39 confers resistance to X.oryzae pathovars. The sequence is that of Disease resistance protein RGA5 from Oryza sativa subsp. japonica (Rice).